The primary structure comprises 301 residues: Ornithine carbamoyltransferase (301 aa).

Residues Arg-100 and 127-130 (HPCQ) each bind carbamoyl phosphate. Residues Asn-158, Asp-221, and 225–226 (SM) contribute to the L-ornithine site. Residues Cys-260 and Arg-288 each contribute to the carbamoyl phosphate site.

This sequence belongs to the aspartate/ornithine carbamoyltransferase superfamily. OTCase family. As to quaternary structure, homododecamer.

It is found in the cytoplasm. The catalysed reaction is carbamoyl phosphate + L-ornithine = L-citrulline + phosphate + H(+). The protein operates within amino-acid biosynthesis; L-arginine biosynthesis; L-arginine from L-ornithine and carbamoyl phosphate: step 1/3. Reversibly catalyzes the transfer of the carbamoyl group from carbamoyl phosphate (CP) to the N(epsilon) atom of ornithine (ORN) to produce L-citrulline. The chain is Ornithine carbamoyltransferase (argF) from Moritella profunda.